Here is a 155-residue protein sequence, read N- to C-terminus: S-ribosylhomocysteine lyase (155 aa).

His58, His62, and Cys125 together coordinate Fe cation.

It belongs to the LuxS family. In terms of assembly, homodimer. Fe cation serves as cofactor.

It catalyses the reaction S-(5-deoxy-D-ribos-5-yl)-L-homocysteine = (S)-4,5-dihydroxypentane-2,3-dione + L-homocysteine. Functionally, involved in the synthesis of autoinducer 2 (AI-2) which is secreted by bacteria and is used to communicate both the cell density and the metabolic potential of the environment. The regulation of gene expression in response to changes in cell density is called quorum sensing. Catalyzes the transformation of S-ribosylhomocysteine (RHC) to homocysteine (HC) and 4,5-dihydroxy-2,3-pentadione (DPD). The protein is S-ribosylhomocysteine lyase of Chromohalobacter salexigens (strain ATCC BAA-138 / DSM 3043 / CIP 106854 / NCIMB 13768 / 1H11).